We begin with the raw amino-acid sequence, 386 residues long: IgA receptor (386 aa).

The signal sequence occupies residues 1 to 41 (MARKDTNKQYSLRKLKTGTASVAVAVAVLGAGFANQTEVKA). The segment at 42-152 (AEIKKPQADS…QKKHQQEQQQ (111 aa)) is igA-binding. Basic and acidic residues-rich tracts occupy residues 79-88 (YADDKEKDPQ), 97-128 (QDLR…EQLE), 134-166 (EADK…DKQI), 174-201 (LSRD…EKQI), 209-221 (LSRD…EAKK), 233-243 (EHQKLKEDKQI), and 251-267 (LSRD…KVEA). Disordered regions lie at residues 79–221 (YADD…EAKK) and 233–268 (EHQK…VEAD). 3 C repeats span residues 158–192 (QKLA…EAEH), 193–227 (QKLK…EADL), and 235–269 (QKLK…EADL). D repeat units lie at residues 302 to 307 (ARLEAE), 308 to 313 (AKALKE), 316 to 321 (AKQAEE), and 323 to 328 (AKLKGN). Positions 323–360 (AKLKGNQTPNAKVAPQANRSRSAMTQQKRTLPSTGETA) are disordered. Over residues 339-359 (ANRSRSAMTQQKRTLPSTGET) the composition is skewed to polar residues. Residues 353–357 (LPSTG) carry the LPXTG sorting signal motif. Pentaglycyl murein peptidoglycan amidated threonine is present on threonine 356. Residues 357 to 386 (GETANPFFTAAAATVMVSAGMLALKRKEEN) constitute a propeptide, removed by sortase.

Belongs to the M protein family.

It is found in the secreted. The protein localises to the cell wall. Binds IgA of both subclasses, and also binds polyclonal IgG weakly. The chain is IgA receptor (arp4) from Streptococcus pyogenes.